We begin with the raw amino-acid sequence, 209 residues long: V-type ATP synthase subunit D (209 aa).

It belongs to the V-ATPase D subunit family.

Its function is as follows. Produces ATP from ADP in the presence of a proton gradient across the membrane. This Chlamydia pneumoniae (Chlamydophila pneumoniae) protein is V-type ATP synthase subunit D (atpD).